The sequence spans 103 residues: UPF0132 membrane protein AF_0105 (103 aa).

Transmembrane regions (helical) follow at residues 5–25 (VAGALSYLLGPITGILFLLME), 35–55 (AMQSTITFAGFWVLDIALSFI), and 58–78 (IGVLLIPIVGLVAFITWLVCI).

Belongs to the UPF0132 family.

The protein resides in the cell membrane. In Archaeoglobus fulgidus (strain ATCC 49558 / DSM 4304 / JCM 9628 / NBRC 100126 / VC-16), this protein is UPF0132 membrane protein AF_0105.